Consider the following 265-residue polypeptide: 1-(5-phosphoribosyl)-5-[(5-phosphoribosylamino)methylideneamino] imidazole-4-carboxamide isomerase (265 aa).

Residue Asp8 is the Proton acceptor of the active site. Asp139 (proton donor) is an active-site residue.

The protein belongs to the HisA/HisF family.

Its subcellular location is the cytoplasm. It catalyses the reaction 1-(5-phospho-beta-D-ribosyl)-5-[(5-phospho-beta-D-ribosylamino)methylideneamino]imidazole-4-carboxamide = 5-[(5-phospho-1-deoxy-D-ribulos-1-ylimino)methylamino]-1-(5-phospho-beta-D-ribosyl)imidazole-4-carboxamide. The protein operates within amino-acid biosynthesis; L-histidine biosynthesis; L-histidine from 5-phospho-alpha-D-ribose 1-diphosphate: step 4/9. The sequence is that of 1-(5-phosphoribosyl)-5-[(5-phosphoribosylamino)methylideneamino] imidazole-4-carboxamide isomerase from Herminiimonas arsenicoxydans.